Consider the following 82-residue polypeptide: Small ribosomal subunit protein bS16 (82 aa).

This sequence belongs to the bacterial ribosomal protein bS16 family.

In Alcanivorax borkumensis (strain ATCC 700651 / DSM 11573 / NCIMB 13689 / SK2), this protein is Small ribosomal subunit protein bS16.